The chain runs to 563 residues: Probable lysosomal cobalamin transporter (563 aa).

A run of 5 helical transmembrane segments spans residues 8–28, 40–60, 95–115, 144–164, and 188–208; these read LIWF…SVFI, FVTF…MLLP, VIYY…IPFA, YTLA…FAPM, and AFTF…VFYT. Residue Asn228 is glycosylated (N-linked (GlcNAc...) asparagine). 4 consecutive transmembrane segments (helical) span residues 314 to 334, 374 to 394, 416 to 436, and 506 to 526; these read GGFS…MTVI, IIFA…VVAV, MLLA…SVVM, and FGAL…VILV. The segment at 537-563 is disordered; sequence ERQLDEDAEEAEEESLLASTGRSGNPT. A compositionally biased stretch (acidic residues) spans 539-551; the sequence is QLDEDAEEAEEES.

The protein belongs to the LIMR family. LMBRD1 subfamily.

It localises to the lysosome membrane. In terms of biological role, probable lysosomal cobalamin transporter. Required to export cobalamin from lysosomes allowing its conversion to cofactors. The protein is Probable lysosomal cobalamin transporter of Neosartorya fischeri (strain ATCC 1020 / DSM 3700 / CBS 544.65 / FGSC A1164 / JCM 1740 / NRRL 181 / WB 181) (Aspergillus fischerianus).